The chain runs to 225 residues: Orotate phosphoribosyltransferase (225 aa).

Lys-32 provides a ligand contact to 5-phospho-alpha-D-ribose 1-diphosphate. An orotate-binding site is contributed by 40 to 41; that stretch reads FF. 5-phospho-alpha-D-ribose 1-diphosphate is bound by residues 78–79, Arg-104, Lys-105, Lys-108, His-110, and 129–137; these read YK and DDVISAGTS. Positions 133 and 161 each coordinate orotate.

The protein belongs to the purine/pyrimidine phosphoribosyltransferase family. PyrE subfamily. In terms of assembly, homodimer. Mg(2+) serves as cofactor.

It catalyses the reaction orotidine 5'-phosphate + diphosphate = orotate + 5-phospho-alpha-D-ribose 1-diphosphate. It participates in pyrimidine metabolism; UMP biosynthesis via de novo pathway; UMP from orotate: step 1/2. In terms of biological role, catalyzes the transfer of a ribosyl phosphate group from 5-phosphoribose 1-diphosphate to orotate, leading to the formation of orotidine monophosphate (OMP). This is Orotate phosphoribosyltransferase from Cupriavidus metallidurans (strain ATCC 43123 / DSM 2839 / NBRC 102507 / CH34) (Ralstonia metallidurans).